The following is a 410-amino-acid chain: Multifunctional CCA protein (410 aa).

The ATP site is built by glycine 8 and arginine 11. Positions 8 and 11 each coordinate CTP. Mg(2+) is bound by residues aspartate 21 and aspartate 23. Residues arginine 91, arginine 137, and arginine 140 each coordinate ATP. Residues arginine 91, arginine 137, and arginine 140 each contribute to the CTP site. Residues 228-329 (TGVHVLSVLQ…LELLQSFDVY (102 aa)) enclose the HD domain.

This sequence belongs to the tRNA nucleotidyltransferase/poly(A) polymerase family. Bacterial CCA-adding enzyme type 1 subfamily. As to quaternary structure, monomer. Can also form homodimers and oligomers. Mg(2+) serves as cofactor. The cofactor is Ni(2+).

The enzyme catalyses a tRNA precursor + 2 CTP + ATP = a tRNA with a 3' CCA end + 3 diphosphate. It carries out the reaction a tRNA with a 3' CCA end + 2 CTP + ATP = a tRNA with a 3' CCACCA end + 3 diphosphate. Its function is as follows. Catalyzes the addition and repair of the essential 3'-terminal CCA sequence in tRNAs without using a nucleic acid template. Adds these three nucleotides in the order of C, C, and A to the tRNA nucleotide-73, using CTP and ATP as substrates and producing inorganic pyrophosphate. tRNA 3'-terminal CCA addition is required both for tRNA processing and repair. Also involved in tRNA surveillance by mediating tandem CCA addition to generate a CCACCA at the 3' terminus of unstable tRNAs. While stable tRNAs receive only 3'-terminal CCA, unstable tRNAs are marked with CCACCA and rapidly degraded. The chain is Multifunctional CCA protein from Pseudomonas paraeruginosa (strain DSM 24068 / PA7) (Pseudomonas aeruginosa (strain PA7)).